The sequence spans 806 residues: Lon protease (806 aa).

The region spanning Leu13 to Ile206 is the Lon N-terminal domain. An ATP-binding site is contributed by Gly356–Thr363. The Lon proteolytic domain occupies Lys599–Arg780. Active-site residues include Ser686 and Lys729.

The protein belongs to the peptidase S16 family. In terms of assembly, homohexamer. Organized in a ring with a central cavity.

Its subcellular location is the cytoplasm. It catalyses the reaction Hydrolysis of proteins in presence of ATP.. In terms of biological role, ATP-dependent serine protease that mediates the selective degradation of mutant and abnormal proteins as well as certain short-lived regulatory proteins. Required for cellular homeostasis and for survival from DNA damage and developmental changes induced by stress. Degrades polypeptides processively to yield small peptide fragments that are 5 to 10 amino acids long. Binds to DNA in a double-stranded, site-specific manner. The sequence is that of Lon protease from Solibacter usitatus (strain Ellin6076).